The chain runs to 127 residues: Large ribosomal subunit protein uL22 (127 aa).

It belongs to the universal ribosomal protein uL22 family. Part of the 50S ribosomal subunit.

Its function is as follows. This protein binds specifically to 23S rRNA; its binding is stimulated by other ribosomal proteins, e.g. L4, L17, and L20. It is important during the early stages of 50S assembly. It makes multiple contacts with different domains of the 23S rRNA in the assembled 50S subunit and ribosome. Functionally, the globular domain of the protein is located near the polypeptide exit tunnel on the outside of the subunit, while an extended beta-hairpin is found that lines the wall of the exit tunnel in the center of the 70S ribosome. The polypeptide is Large ribosomal subunit protein uL22 (Methylorubrum populi (strain ATCC BAA-705 / NCIMB 13946 / BJ001) (Methylobacterium populi)).